The sequence spans 221 residues: GTP cyclohydrolase 1 (221 aa).

Zn(2+) contacts are provided by Cys109, His112, and Cys180.

It belongs to the GTP cyclohydrolase I family. As to quaternary structure, toroid-shaped homodecamer, composed of two pentamers of five dimers.

The catalysed reaction is GTP + H2O = 7,8-dihydroneopterin 3'-triphosphate + formate + H(+). It functions in the pathway cofactor biosynthesis; 7,8-dihydroneopterin triphosphate biosynthesis; 7,8-dihydroneopterin triphosphate from GTP: step 1/1. This chain is GTP cyclohydrolase 1, found in Serratia proteamaculans (strain 568).